The chain runs to 433 residues: Mitochondrial inner membrane magnesium transporter MIT1 (433 aa).

Residues 257–298 are a coiled coil; sequence TNKLLRDMMKIKNNLQKLSNLLNALRTNIEKILNNENDMKNM. The helical transmembrane segment at 360–380 threads the bilayer; that stretch reads FILLNAKISFSTLLFSISSVV. Topologically, residues 381–396 are extracellular; that stretch reads TSLFGMNLKNFVEDSN. Residues 397–417 traverse the membrane as a helical segment; it reads YAFIIVSIFVSVWSIIGIYVT. Over 418–433 the chain is Mitochondrial matrix; the sequence is KNINTLLKFFDRYNFR.

This sequence belongs to the CorA metal ion transporter (MIT) (TC 1.A.35) family.

It localises to the mitochondrion inner membrane. Functionally, mitochondrial inner membrane magnesium transporter required for mitochondrial magnesium homeostasis. Involved in the development of the sporozoite in the mosquito vector midgut. The chain is Mitochondrial inner membrane magnesium transporter MIT1 from Plasmodium berghei (strain Anka).